The sequence spans 240 residues: Peptidyl-tRNA hydrolase (240 aa).

Residue Tyr-14 coordinates tRNA. The active-site Proton acceptor is His-19. 3 residues coordinate tRNA: Tyr-64, Asn-66, and Asn-112. Positions 190 to 204 (KADEEKPRKDSEKKP) are enriched in basic and acidic residues. Residues 190–240 (KADEEKPRKDSEKKPAGQSHIRQARNNNQPKLPATGPMADMLKKMFGNKGE) form a disordered region. The segment covering 209–219 (HIRQARNNNQP) has biased composition (polar residues).

This sequence belongs to the PTH family. In terms of assembly, monomer.

The protein resides in the cytoplasm. It carries out the reaction an N-acyl-L-alpha-aminoacyl-tRNA + H2O = an N-acyl-L-amino acid + a tRNA + H(+). Its function is as follows. Hydrolyzes ribosome-free peptidyl-tRNAs (with 1 or more amino acids incorporated), which drop off the ribosome during protein synthesis, or as a result of ribosome stalling. Catalyzes the release of premature peptidyl moieties from peptidyl-tRNA molecules trapped in stalled 50S ribosomal subunits, and thus maintains levels of free tRNAs and 50S ribosomes. The chain is Peptidyl-tRNA hydrolase from Rhizobium etli (strain ATCC 51251 / DSM 11541 / JCM 21823 / NBRC 15573 / CFN 42).